The primary structure comprises 747 residues: ATP-dependent DNA helicase Hel308 (747 aa).

Residues glutamine 29 and 47 to 54 (VPTASGKT) each bind ATP. Residues 34 to 200 (DAGVADGESL…WLDAELVDSS (167 aa)) form the Helicase ATP-binding domain. The short motif at 145-148 (DEVH) is the DEAH box element. The region spanning 234-434 (PTEAVVRETL…REPSMRTHLL (201 aa)) is the Helicase C-terminal domain. Residues 711–747 (AAGHQQPEMDGVTPDADVKESAAAAGTDDGQANLGDF) are disordered.

The protein belongs to the helicase family. Hel308 subfamily. Monomer.

The catalysed reaction is Couples ATP hydrolysis with the unwinding of duplex DNA by translocating in the 3'-5' direction.. The enzyme catalyses ATP + H2O = ADP + phosphate + H(+). Its function is as follows. DNA-dependent ATPase and 3'-5' DNA helicase that may be involved in repair of stalled replication forks. The protein is ATP-dependent DNA helicase Hel308 of Natronomonas pharaonis (strain ATCC 35678 / DSM 2160 / CIP 103997 / JCM 8858 / NBRC 14720 / NCIMB 2260 / Gabara) (Halobacterium pharaonis).